Reading from the N-terminus, the 216-residue chain is N-glycosylase/DNA lyase (216 aa).

Positions 27, 48, and 59 each coordinate 8-oxoguanine. Positions 106–170 (EHYYENMVAL…LDYRLKKINP (65 aa)) are helix-hairpin-helix. The Schiff-base intermediate with DNA role is filled by K130. Residues F134 and P160 each coordinate 8-oxoguanine. D162 is a catalytic residue. Residues D190 and W194 each coordinate 8-oxoguanine.

It belongs to the archaeal N-glycosylase/DNA lyase (AGOG) family.

It catalyses the reaction 2'-deoxyribonucleotide-(2'-deoxyribose 5'-phosphate)-2'-deoxyribonucleotide-DNA = a 3'-end 2'-deoxyribonucleotide-(2,3-dehydro-2,3-deoxyribose 5'-phosphate)-DNA + a 5'-end 5'-phospho-2'-deoxyribonucleoside-DNA + H(+). Its function is as follows. DNA repair enzyme that is part of the base excision repair (BER) pathway; protects from oxidative damage by removing the major product of DNA oxidation, 8-oxoguanine (GO), from single- and double-stranded DNA substrates. This is N-glycosylase/DNA lyase from Nanoarchaeum equitans (strain Kin4-M).